A 413-amino-acid chain; its full sequence is Ribulose bisphosphate carboxylase/oxygenase activase, chloroplastic (413 aa).

A chloroplast-targeting transit peptide spans 1–54; the sequence is MAATVSTIGAVNRTTLNNSNYGGLVPNSAFLGSRLKVSSRFTTSKMVTGNFKIV. Residue 162-169 coordinates ATP; it reads GGKGQGKS.

Belongs to the RuBisCO activase family.

The protein localises to the plastid. The protein resides in the chloroplast stroma. Functionally, activation of RuBisCO (ribulose-1,5-bisphosphate carboxylase/oxygenase; EC 4.1.1.39) involves the ATP-dependent carboxylation of the epsilon-amino group of lysine leading to a carbamate structure. This Cucumis sativus (Cucumber) protein is Ribulose bisphosphate carboxylase/oxygenase activase, chloroplastic.